The chain runs to 654 residues: Translation factor GUF1, mitochondrial (654 aa).

One can recognise a tr-type G domain in the interval 57–237 (ENYRNFSIVA…SVIKNIPSPV (181 aa)). GTP-binding positions include 66–73 (AHVDHGKS), 130–134 (DTPGH), and 184–187 (NKID).

It belongs to the TRAFAC class translation factor GTPase superfamily. Classic translation factor GTPase family. LepA subfamily.

Its subcellular location is the mitochondrion inner membrane. The enzyme catalyses GTP + H2O = GDP + phosphate + H(+). Promotes mitochondrial protein synthesis. May act as a fidelity factor of the translation reaction, by catalyzing a one-codon backward translocation of tRNAs on improperly translocated ribosomes. Binds to mitochondrial ribosomes in a GTP-dependent manner. The protein is Translation factor GUF1, mitochondrial of Candida albicans (strain WO-1) (Yeast).